We begin with the raw amino-acid sequence, 282 residues long: MKELVILTGHSGAGKSTAAGLLEDLGFFCIDNLPPEVVYQVASILSNNVDKLAIVLDIRSYLFGNIQNAIKDVKERYPFTKVLFLTAAKDTLIQRFAHTRRSHPLSKQTNSIGEAIELEFEIMKEIMEIADLVIDTTMLNPHQLRTKLTTFLEEKSEKTFVVHVISFGFKYGMPLDADFVFDARFFPNPFYINELRPKTGKDEEVKEFLRKIDGVSEYLNKIYELINIAISRYETEGRKEITVAIGCTGGKHRSVYFAEELGQMFLNKDYKVTIEHRDVELG.

Position 9-16 (9-16 (GHSGAGKS)) interacts with ATP. Residue 57–60 (DIRS) participates in GTP binding.

The protein belongs to the RapZ-like family.

In terms of biological role, displays ATPase and GTPase activities. This is Nucleotide-binding protein Fnod_1159 from Fervidobacterium nodosum (strain ATCC 35602 / DSM 5306 / Rt17-B1).